A 195-amino-acid chain; its full sequence is Putative kinase protein 143R (195 aa).

8-16 serves as a coordination point for ATP; that stretch reads GIIGAGKST. Residues Glu-31, Tyr-43, and Gln-54 each contribute to the substrate site. The Proton acceptor role is filled by Glu-78. Positions 79 and 142 each coordinate substrate.

The protein belongs to the DCK/DGK family.

This chain is Putative kinase protein 143R, found in Acheta domesticus (House cricket).